The primary structure comprises 103 residues: G0/G1 switch protein 2 (103 aa).

Residues Leu80–Ser103 are disordered.

As to quaternary structure, directly interacts with BCL2; this interaction prevents the formation of the anti-apoptotic BAX-BCL2 complex. Widely expressed with highest levels in peripheral blood, skeletal muscle and heart, followed by kidney and liver.

It localises to the mitochondrion. Promotes apoptosis by binding to BCL2, hence preventing the formation of protective BCL2-BAX heterodimers. The chain is G0/G1 switch protein 2 (G0S2) from Homo sapiens (Human).